The sequence spans 283 residues: Pantothenate synthetase (283 aa).

30-37 (MGNLHSGH) is a binding site for ATP. H37 functions as the Proton donor in the catalytic mechanism. (R)-pantoate is bound at residue Q61. Position 61 (Q61) interacts with beta-alanine. ATP is bound at residue 149 to 152 (GEKD). Q155 serves as a coordination point for (R)-pantoate. Residues V178 and 186 to 189 (LSSR) contribute to the ATP site.

Belongs to the pantothenate synthetase family. As to quaternary structure, homodimer.

Its subcellular location is the cytoplasm. The enzyme catalyses (R)-pantoate + beta-alanine + ATP = (R)-pantothenate + AMP + diphosphate + H(+). Its pathway is cofactor biosynthesis; (R)-pantothenate biosynthesis; (R)-pantothenate from (R)-pantoate and beta-alanine: step 1/1. In terms of biological role, catalyzes the condensation of pantoate with beta-alanine in an ATP-dependent reaction via a pantoyl-adenylate intermediate. This is Pantothenate synthetase from Pseudomonas savastanoi pv. phaseolicola (strain 1448A / Race 6) (Pseudomonas syringae pv. phaseolicola (strain 1448A / Race 6)).